Here is a 255-residue protein sequence, read N- to C-terminus: uncharacterized protein (255 aa).

A signal peptide spans 1–23 (MKRLNKLVLGISFLFLVISITAG). A lipid anchor (N-palmitoyl cysteine) is attached at C24. C24 carries S-diacylglycerol cysteine lipidation.

The protein belongs to the staphylococcal tandem lipoprotein family.

It localises to the cell membrane. This is an uncharacterized protein from Staphylococcus aureus (strain N315).